We begin with the raw amino-acid sequence, 644 residues long: MAILAWLEPRPLLAVLVLVLTMRMAQPAHLLTLLSSGQGALDRVALGGLLNTLAARVHCTSGPCGKCLSVDDLLALGRPEEPGHLARLSAAAALYLSDPEGTCEDIRAGRWASRADHLLALLEGPKALAPGLSRLLQRIQAQTTGQPSAGEACVDPPQLLREAGVAGAPGSPGPVLATLLEHVGRGSCFHTLPTPQYFVDFVFQQSHGNTPNISVAELAALMQRLGVGGVTETHSDHHHQEKRVNRQGPTPLTAPNSSSDTWDTVCLSARDVMAVYGLSEQTGVTPEAWAQLSPALLQQQLSGACSPQPSHPAQNQLSQAEKYLYGSLATLLICLCSTFGLLLLTCAACSTAAHYVIQTFLGMAVGALTGDALLHLTPKVLGLHQHGGDSEHRADSHGPQTTWRLVVALSGLYVFFLFEKLCDLLLPQDPEDRKGTPRSHSGHSHGMSLQLAPRELRPPKQPHEGSRADLVAEESPELLSPEPRRKSPELRLLPYMITLGDGLHNFADGLAVGAAFASSWKTGLATSLAVFCHEVPHELGDFAALLHAGLPVSRALLLNLASGLTAFAGLYVALALGVGEESESWTLAVAIGLFLYVALCDMLPAMLNVRDPRPWLLFLLHNVGLLGGWAVLLLLSLYEDSIAL.

Residues 1-27 (MAILAWLEPRPLLAVLVLVLTMRMAQP) form the signal peptide. The Extracellular portion of the chain corresponds to 28-323 (AHLLTLLSSG…QNQLSQAEKY (296 aa)). Cystine bridges form between Cys-59–Cys-64, Cys-67–Cys-103, and Cys-153–Cys-188. The disordered stretch occupies residues 231-259 (TETHSDHHHQEKRVNRQGPTPLTAPNSSS). A compositionally biased stretch (basic and acidic residues) spans 233-244 (THSDHHHQEKRV). The span at 247-259 (QGPTPLTAPNSSS) shows a compositional bias: polar residues. Cys-266 and Cys-305 are joined by a disulfide. The chain crosses the membrane as a helical span at residues 324 to 344 (LYGSLATLLICLCSTFGLLLL). The Cytoplasmic portion of the chain corresponds to 345–355 (TCAACSTAAHY). Residues 356–376 (VIQTFLGMAVGALTGDALLHL) form a helical membrane-spanning segment. At 377-404 (TPKVLGLHQHGGDSEHRADSHGPQTTWR) the chain is on the extracellular side. The chain crosses the membrane as a helical span at residues 405–425 (LVVALSGLYVFFLFEKLCDLL). The Cytoplasmic portion of the chain corresponds to 426–495 (LPQDPEDRKG…KSPELRLLPY (70 aa)). The Essential for SLC39A4 endocytosis signature appears at 449-451 (LQL). Over residues 456–467 (LRPPKQPHEGSR) the composition is skewed to basic and acidic residues. A disordered region spans residues 456 to 484 (LRPPKQPHEGSRADLVAEESPELLSPEPR). Residues 496–515 (MITLGDGLHNFADGLAVGAA) form a helical membrane-spanning segment. The Zn(2+) site is built by His-504, Asn-505, and Asp-508. The Extracellular segment spans residues 516-523 (FASSWKTG). Residues 524 to 550 (LATSLAVFCHEVPHELGDFAALLHAGL) form a helical membrane-spanning segment. His-533, Glu-534, and His-537 together coordinate Zn(2+). Residues 551–555 (PVSRA) are Cytoplasmic-facing. The chain crosses the membrane as a helical span at residues 556 to 576 (LLLNLASGLTAFAGLYVALAL). The Extracellular portion of the chain corresponds to 577–583 (GVGEESE). The chain crosses the membrane as a helical span at residues 584-604 (SWTLAVAIGLFLYVALCDMLP). Over 605-614 (AMLNVRDPRP) the chain is Cytoplasmic. A helical membrane pass occupies residues 615 to 635 (WLLFLLHNVGLLGGWAVLLLL). The Extracellular segment spans residues 636–644 (SLYEDSIAL).

It belongs to the ZIP transporter (TC 2.A.5) family. Homodimer. The extracellular N-terminal ectodomain is cleaved when cells are Zn(2+) deficient, N-terminally cleaved SLC39A4 is internalized at a faster rate. Post-translationally, under excess Zn(2+) conditions, SLC39A4 on the cell surface is rapidly endocytosed, ubiquitinated and degraded. In terms of processing, glycosylated.

Its subcellular location is the cell membrane. The protein localises to the recycling endosome membrane. The protein resides in the apical cell membrane. It carries out the reaction Zn(2+)(in) = Zn(2+)(out). In terms of biological role, selective transporter that mediates the uptake of Zn(2+). Plays an essential role for dietary zinc uptake from small intestine. The Zn(2+) uniporter activity is regulated by zinc availability. Also exhibits polyspecific binding and transport of Cu(2+), Cd(2+) and possibly Ni(2+) but at higher concentrations. The sequence is that of Zinc transporter ZIP4 from Pteropus alecto (Black flying fox).